The primary structure comprises 122 residues: Large ribosomal subunit protein uL14 (122 aa).

It belongs to the universal ribosomal protein uL14 family. Part of the 50S ribosomal subunit. Forms a cluster with proteins L3 and L19. In the 70S ribosome, L14 and L19 interact and together make contacts with the 16S rRNA in bridges B5 and B8.

Its function is as follows. Binds to 23S rRNA. Forms part of two intersubunit bridges in the 70S ribosome. The polypeptide is Large ribosomal subunit protein uL14 (Mycoplasma pneumoniae (strain ATCC 29342 / M129 / Subtype 1) (Mycoplasmoides pneumoniae)).